We begin with the raw amino-acid sequence, 331 residues long: Syntaxin-43 (331 aa).

The Cytoplasmic portion of the chain corresponds to 1-305 (MATRNRTLLF…KAERTQRQGG (305 aa)). 2 disordered regions span residues 20-45 (VRAP…KSGL) and 59-80 (PNRS…GTIT). Residues 31 to 40 (TLTEHNSLTG) show a composition bias toward polar residues. Residues 124 to 154 (KEDQHQIETLTQEVTFLLKKSEKQLQRLSAA) are a coiled coil. In terms of domain architecture, t-SNARE coiled-coil homology spans 235–297 (EEISIEREKE…DDGLKQLQKA (63 aa)). A helical; Anchor for type IV membrane protein transmembrane segment spans residues 306-326 (MVMCASVLVILCFIMLVLLIL). The Vesicular segment spans residues 327 to 331 (KEILL).

It belongs to the syntaxin family. As to quaternary structure, part of the t-SNARE complex. Expressed at low levels in roots, stems, flowers and leaves.

It is found in the golgi apparatus. Its subcellular location is the trans-Golgi network membrane. Its function is as follows. Contributes to the regulation of secretory and vacuolar transport pathways in the post-Golgi network, and to the maintenance of the Golgi apparatus and trans-Golgi network (TGN) morphologies. Vesicle trafficking protein that functions in the secretory pathway and mediates liposome fusion. Required for extracellular resistance responses to a fungal pathogen. Also involved in the protection of chloroplasts from salicylic acid-dependent biotic stress. The polypeptide is Syntaxin-43 (Arabidopsis thaliana (Mouse-ear cress)).